The sequence spans 1692 residues: MEAVPRMPMIWLDLKEAGDFHFQSAVKKFVLKNYGENPEAYNEELKKLELLRQNAIRVARDFEGCSVLRKYLGQLHYLQSRVPMGSGQEAAVAVTWTEIFSGKSVSHEDIKYEQACILYNLGALHSMLGAMDKRVSEEGMKVSCTHFQCAAGAFAYLREHFPQAFSVDMSRQILTLNVNLMLGQAQECLLEKSMLDNRKSFLVARISAQVVDYYKEACRALENPDTASLLGRIQKDWKKLVQMKIYYFAAVAHLHMGKQAEEQQKFGERVAYFQSALDKLNEAIKLAKGQPDTVQDALRFAMDVIGGKYNSAKKDNDFIYHEAVPALDTLQPVKGAPLVKPLPVNPTDPAVTGPDIFAKLVPMAAHEASSLYSEEKAKLLREMLAKIEDKNEVLDQFMDSMQLDPETVDNLDAYNHIPPQLMEKCAALSVRPDTVKNLVQSMQVLSGVFTDVEASLKDIRDLLEEDELQEQKLQETLGQAGAGPGPSVAKAELAEVRREWAKYMEVHEKASFTNSELHRAMNLHVGNLRLLSGPLDQVRAALPTPALTPEDKAVLQNLKRILAKVQEMRDQRVSLEQQLRELIQKDDITASLVTTDHSEMKKLFEEQLKKYDQLKVYLEQNLAAQDNVLRALTEANVQYAAVRRVLSELDQKWNSTLQTLVASYEAYEDLMKKSQEGKDFYADLESKVATLLERAQSICRAQEAARQQLLDRELKKKAPPPRPTAPKPLLSRREEGEAVEAGDTPEELRSLPPDMMVGPRLPDPFLGTTAPLHFSPGPFPSSTGPATHYLSGPLPPGTYSGPTQLMQPRAAVPMAPATVLYPAPAYTSELGLVPRSSPQHGIVSSPYAGVGPPQPVVGLPSAPPPQLSGPELAMTVRPATTTVDSVQAPISSHTAPRPNPTPALPQPCFPVPQPVPQSVPQPQPLPVPYTYSIGTKQPLPAPYTYSIGTKQHLTGPLPQHQFPPGIPTGFPVPRTGPQAQAQPQPQPQPQPQPQPQPQPQPQPQSQSQPQPQPQPQPQRPAFGPQPTQQPLPFQHPHLFPSQAPGILPPPPPTPYHFTPQPGVLGQPPPTLHTQLYPGPSQDPLPPHSGALPFPSPGPPHPHPTLAYGPAPSPRPLGPQATPVSIRGPPPASQPTPSPHLVPSPAPSPGPGPVPSRPPTAEPPPCLRRGAAAADLLSSSPESQHGGTQPPGGGQPLLQPTKVDAAEGRRPQALRLIEQDPYEHPERLQQLQQELEAFRGQLGDAGALDAIWRELQEAQEHDARGRSIAIARCYSLKNRHQDVMPYDSNRVVLRSGKDDYINASCVEGLSPYCPPLVATQAPLPGTAADFWLMVHEQKVSVIVMLVSEAEMEKQKVARYFPTERGQPMVHGALSVALSSIRTTETHVERVLSLQFRDQSLKRSLVHLHFPTWPELGLPDSPGNLLRFIQEVHAHYLHQRPLHTPIVVHCSSGVGRTGAFALLYAAVQEVEAGNGIPELPQLVRRMRQQRKHMLQEKLHLKFCHEALVRHVEQVLQRHGVPPPGKPVASVNISQKNHLPQDSQDLVLGGDVPISSIQATIAKLSIRPLGGLDSPAASLPGLVEPPGLPPASLPESTPVPSSSPPPLSSPLPEAPQPEEEPSVPEAPSLGPPSSSLELLASLTPEAFSLDSSLRGKQRMSKQNFLQAHNGQGLRAAQPTDDPLSLLDPLWTLNKT.

The BRO1 domain occupies 8–394 (PMIWLDLKEA…AKIEDKNEVL (387 aa)). TPR repeat units follow at residues 250-283 (AVAH…LNEA) and 374-407 (EEKA…DPET). The stretch at 552-639 (KAVLQNLKRI…RALTEANVQY (88 aa)) forms a coiled coil. 3 disordered regions span residues 711–788 (DREL…PATH), 884–923 (DSVQ…PQPQ), and 944–1199 (TYSI…LLQP). Position 744 is a phosphothreonine (Thr744). The interval 773 to 1186 (HFSPGPFPSS…SSSPESQHGG (414 aa)) is his. Low complexity predominate over residues 774 to 785 (FSPGPFPSSTGP). The span at 884–894 (DSVQAPISSHT) shows a compositional bias: polar residues. Pro residues predominate over residues 897–923 (RPNPTPALPQPCFPVPQPVPQSVPQPQ). Arg974 carries the omega-N-methylarginine modification. 21 repeat units span residues 977–978 (PQ), 979–980 (AQ), 981–982 (AQ), 983–984 (PQ), 985–986 (PQ), 987–988 (PQ), 989–990 (PQ), 991–992 (PQ), 993–994 (PQ), 995–996 (PQ), 997–998 (PQ), 999–1000 (PQ), 1001–1002 (PQ), 1003–1004 (PQ), 1005–1006 (SQ), 1007–1008 (SQ), 1009–1010 (PQ), 1011–1012 (PQ), 1013–1014 (PQ), 1015–1016 (PQ), and 1017–1018 (PQ). The 21 X 2 AA approximate tandem repeats of P-Q stretch occupies residues 977-1018 (PQAQAQPQPQPQPQPQPQPQPQPQPQPQSQSQPQPQPQPQPQ). Residues 984 to 1002 (QPQPQPQPQPQPQPQPQPQ) show a composition bias toward pro residues. 2 stretches are compositionally biased toward pro residues: residues 1093 to 1102 (FPSPGPPHPH) and 1127 to 1165 (GPPP…PPPC). Residues Ser1178 and Ser1179 each carry the phosphoserine modification. Thr1187 bears the Phosphothreonine mark. In terms of domain architecture, Tyrosine-protein phosphatase spans 1248–1508 (DAIWRELQEA…KFCHEALVRH (261 aa)). The Phosphocysteine intermediate role is filled by Cys1448. The interval 1574 to 1638 (ASLPGLVEPP…PSSSLELLAS (65 aa)) is disordered. Over residues 1598–1612 (SSSPPPLSSPLPEAP) the composition is skewed to pro residues. Residues 1620-1638 (VPEAPSLGPPSSSLELLAS) are compositionally biased toward low complexity. Arg1671 is subject to Omega-N-methylarginine.

Belongs to the protein-tyrosine phosphatase family. Non-receptor class subfamily. Interacts with GRAP2 and GRB2. Interacts with UBAP1 and CHMP4B.

The protein localises to the nucleus. It localises to the cytoplasm. It is found in the cytoplasmic vesicle. Its subcellular location is the endosome. The protein resides in the cytoskeleton. The protein localises to the cilium basal body. The catalysed reaction is O-phospho-L-tyrosyl-[protein] + H2O = L-tyrosyl-[protein] + phosphate. Plays a role in sorting of endocytic ubiquitinated cargos into multivesicular bodies (MVBs) via its interaction with the ESCRT-I complex (endosomal sorting complex required for transport I), and possibly also other ESCRT complexes. May act as a negative regulator of Ras-mediated mitogenic activity. Plays a role in ciliogenesis. The chain is Tyrosine-protein phosphatase non-receptor type 23 (Ptpn23) from Mus musculus (Mouse).